Here is a 66-residue protein sequence, read N- to C-terminus: Ocellatin-PT4 (66 aa).

An N-terminal signal peptide occupies residues 1-22; it reads MAFLKKSLFLVLFLGLVSLSIC. A propeptide spanning residues 23 to 39 is cleaved from the precursor; the sequence is DEEKRQDEDDDDDDDEE. Valine 66 carries the valine amide modification.

As to expression, expressed by the skin glands.

It is found in the secreted. Functionally, has antibacterial activity against Gram-negative bacteria E.coli ATCC 25922 (MIC=80 uM), K.pneumoniae ATCC 700603 (MIC=310 uM) and S.choleraesuis ATCC 14028 (MIC=310 uM). Shows no hemolytic activity and no cytotoxicity. The polypeptide is Ocellatin-PT4 (Leptodactylus pustulatus (Ceara white-lipped frog)).